Here is a 354-residue protein sequence, read N- to C-terminus: Methionine import ATP-binding protein MetN (354 aa).

Positions 8–250 (LDHIDITFRQ…PKEALTQKFI (243 aa)) constitute an ABC transporter domain. 42–49 (GYSGAGKS) contacts ATP.

The protein belongs to the ABC transporter superfamily. Methionine importer (TC 3.A.1.24) family. The complex is composed of two ATP-binding proteins (MetN), two transmembrane proteins (MetI) and a solute-binding protein (MetQ).

It localises to the cell membrane. The catalysed reaction is L-methionine(out) + ATP + H2O = L-methionine(in) + ADP + phosphate + H(+). It carries out the reaction D-methionine(out) + ATP + H2O = D-methionine(in) + ADP + phosphate + H(+). Part of the ABC transporter complex MetNIQ involved in methionine import. Responsible for energy coupling to the transport system. This Streptococcus pyogenes serotype M6 (strain ATCC BAA-946 / MGAS10394) protein is Methionine import ATP-binding protein MetN.